A 235-amino-acid polypeptide reads, in one-letter code: 2-C-methyl-D-erythritol 4-phosphate cytidylyltransferase (235 aa).

The protein belongs to the IspD/TarI cytidylyltransferase family. IspD subfamily.

The enzyme catalyses 2-C-methyl-D-erythritol 4-phosphate + CTP + H(+) = 4-CDP-2-C-methyl-D-erythritol + diphosphate. It participates in isoprenoid biosynthesis; isopentenyl diphosphate biosynthesis via DXP pathway; isopentenyl diphosphate from 1-deoxy-D-xylulose 5-phosphate: step 2/6. In terms of biological role, catalyzes the formation of 4-diphosphocytidyl-2-C-methyl-D-erythritol from CTP and 2-C-methyl-D-erythritol 4-phosphate (MEP). In Leptospira borgpetersenii serovar Hardjo-bovis (strain L550), this protein is 2-C-methyl-D-erythritol 4-phosphate cytidylyltransferase.